A 611-amino-acid chain; its full sequence is Dihydroxy-acid dehydratase (611 aa).

Asp-81 lines the Mg(2+) pocket. Cys-122 is a binding site for [2Fe-2S] cluster. Residues Asp-123 and Lys-124 each coordinate Mg(2+). Lys-124 is modified (N6-carboxylysine). Residue Cys-195 coordinates [2Fe-2S] cluster. Glu-491 contributes to the Mg(2+) binding site. Ser-517 functions as the Proton acceptor in the catalytic mechanism.

This sequence belongs to the IlvD/Edd family. In terms of assembly, homodimer. Requires [2Fe-2S] cluster as cofactor. The cofactor is Mg(2+).

It catalyses the reaction (2R)-2,3-dihydroxy-3-methylbutanoate = 3-methyl-2-oxobutanoate + H2O. It carries out the reaction (2R,3R)-2,3-dihydroxy-3-methylpentanoate = (S)-3-methyl-2-oxopentanoate + H2O. Its pathway is amino-acid biosynthesis; L-isoleucine biosynthesis; L-isoleucine from 2-oxobutanoate: step 3/4. The protein operates within amino-acid biosynthesis; L-valine biosynthesis; L-valine from pyruvate: step 3/4. In terms of biological role, functions in the biosynthesis of branched-chain amino acids. Catalyzes the dehydration of (2R,3R)-2,3-dihydroxy-3-methylpentanoate (2,3-dihydroxy-3-methylvalerate) into 2-oxo-3-methylpentanoate (2-oxo-3-methylvalerate) and of (2R)-2,3-dihydroxy-3-methylbutanoate (2,3-dihydroxyisovalerate) into 2-oxo-3-methylbutanoate (2-oxoisovalerate), the penultimate precursor to L-isoleucine and L-valine, respectively. The protein is Dihydroxy-acid dehydratase of Agrobacterium fabrum (strain C58 / ATCC 33970) (Agrobacterium tumefaciens (strain C58)).